Here is a 497-residue protein sequence, read N- to C-terminus: ATP synthase subunit alpha 2 (497 aa).

Residue 167-174 participates in ATP binding; sequence GERATGKT.

This sequence belongs to the ATPase alpha/beta chains family. In terms of assembly, F-type ATPases have 2 components, CF(1) - the catalytic core - and CF(0) - the membrane proton channel. CF(1) has five subunits: alpha(3), beta(3), gamma(1), delta(1), epsilon(1). CF(0) has four main subunits: a(1), b(1), b'(1) and c(9-12).

It is found in the cell inner membrane. It catalyses the reaction ATP + H2O + 4 H(+)(in) = ADP + phosphate + 5 H(+)(out). Produces ATP from ADP in the presence of a proton gradient across the membrane. The alpha chain is a regulatory subunit. The chain is ATP synthase subunit alpha 2 from Cereibacter sphaeroides (strain ATCC 17029 / ATH 2.4.9) (Rhodobacter sphaeroides).